Reading from the N-terminus, the 282-residue chain is NADPH-dependent 7-cyano-7-deazaguanine reductase (282 aa).

Residue 88–90 participates in substrate binding; the sequence is IES. Residue 90–91 participates in NADPH binding; the sequence is SK. The active-site Thioimide intermediate is the C190. Residue D197 is the Proton donor of the active site. 229 to 230 is a binding site for substrate; the sequence is HE. An NADPH-binding site is contributed by 258-259; that stretch reads RG.

Belongs to the GTP cyclohydrolase I family. QueF type 2 subfamily. In terms of assembly, homodimer.

It is found in the cytoplasm. The catalysed reaction is 7-aminomethyl-7-carbaguanine + 2 NADP(+) = 7-cyano-7-deazaguanine + 2 NADPH + 3 H(+). Its pathway is tRNA modification; tRNA-queuosine biosynthesis. Catalyzes the NADPH-dependent reduction of 7-cyano-7-deazaguanine (preQ0) to 7-aminomethyl-7-deazaguanine (preQ1). The chain is NADPH-dependent 7-cyano-7-deazaguanine reductase from Pectobacterium carotovorum subsp. carotovorum (strain PC1).